A 259-amino-acid polypeptide reads, in one-letter code: Cysteine protease IpaJ (259 aa).

Active-site residues include Cys-64, His-206, and Asp-218.

The protein localises to the secreted. The protein resides in the host cytoplasm. Functionally, virulence factor that eliminates N-myristoyl protein modifications in infected host cells. Acts as a cysteine protease that cleaves the peptide bond between N-myristoylated Gly-2 and Asn-3 of human ARF1, leading to the elimination of the myristoyl group and alteration of protein trafficking in host cell. Could also cleave an array of N-myristoylated host proteins involved in cellular growth, signal transduction, autophagasome maturation and organelle function. This chain is Cysteine protease IpaJ (ipaJ), found in Shigella flexneri.